The chain runs to 235 residues: UPF0173 metal-dependent hydrolase Oant_3663 (235 aa).

Belongs to the UPF0173 family.

The sequence is that of UPF0173 metal-dependent hydrolase Oant_3663 from Brucella anthropi (strain ATCC 49188 / DSM 6882 / CCUG 24695 / JCM 21032 / LMG 3331 / NBRC 15819 / NCTC 12168 / Alc 37) (Ochrobactrum anthropi).